A 143-amino-acid polypeptide reads, in one-letter code: Large ribosomal subunit protein uL13 (143 aa).

Belongs to the universal ribosomal protein uL13 family. Part of the 50S ribosomal subunit.

Its function is as follows. This protein is one of the early assembly proteins of the 50S ribosomal subunit, although it is not seen to bind rRNA by itself. It is important during the early stages of 50S assembly. The protein is Large ribosomal subunit protein uL13 of Caldanaerobacter subterraneus subsp. tengcongensis (strain DSM 15242 / JCM 11007 / NBRC 100824 / MB4) (Thermoanaerobacter tengcongensis).